Consider the following 194-residue polypeptide: uncharacterized protein (194 aa).

CBS domains are found at residues 13–72 (MSFP…PKDV) and 78–133 (MSKK…LLEI). An ACP-type MB domain is found at 159-192 (YINGICENCGYQGRVRLYQGRYLCDECIEEFEEK). Cys164, Cys167, Cys182, and Cys185 together coordinate Fe cation. Zn(2+) contacts are provided by Cys164, Cys167, Cys182, and Cys185.

This is an uncharacterized protein from Methanocaldococcus jannaschii (strain ATCC 43067 / DSM 2661 / JAL-1 / JCM 10045 / NBRC 100440) (Methanococcus jannaschii).